Here is a 370-residue protein sequence, read N- to C-terminus: DNA primase small subunit PriS (370 aa).

Active-site residues include aspartate 92, aspartate 94, and aspartate 272.

This sequence belongs to the eukaryotic-type primase small subunit family. Heterodimer of a small subunit (PriS) and a large subunit (PriL). Mg(2+) is required as a cofactor. Mn(2+) serves as cofactor.

Its function is as follows. Catalytic subunit of DNA primase, an RNA polymerase that catalyzes the synthesis of short RNA molecules used as primers for DNA polymerase during DNA replication. The small subunit contains the primase catalytic core and has DNA synthesis activity on its own. Binding to the large subunit stabilizes and modulates the activity, increasing the rate of DNA synthesis while decreasing the length of the DNA fragments, and conferring RNA synthesis capability. The DNA polymerase activity may enable DNA primase to also catalyze primer extension after primer synthesis. May also play a role in DNA repair. This chain is DNA primase small subunit PriS, found in Picrophilus torridus (strain ATCC 700027 / DSM 9790 / JCM 10055 / NBRC 100828 / KAW 2/3).